Consider the following 41-residue polypeptide: Plantazolicin (41 aa).

Residues 1-27 (MTQIKVPTALIASVHGEGQHLFEPMAA) constitute a propeptide that is removed on maturation. The residue at position 28 (Arg-28) is an N2,N2-dimethylarginine. Residues 28–29 (RC) constitute a cross-link (thiazole-4-carboxylic acid (Arg-Cys)). Cross-links (5-methyloxazole-4-carboxylic acid (Cys-Thr)) lie at residues 29 to 30 (CT) and 31 to 32 (CT). The thiazole-4-carboxylic acid (Thr-Cys) cross-link spans 30 to 31 (TC). Positions 32–33 (TT) form a cross-link, 5-methyloxazole-4-carboxylic acid (Thr-Thr). Positions 35–36 (IS) form a cross-link, oxazole-4-carboxylic acid (Ile-Ser). 3 consecutive cross-links (oxazole-4-carboxylic acid (Ser-Ser)) follow at residues 36 to 37 (SS), 37 to 38 (SS), and 38 to 39 (SS). The segment at residues 39 to 40 (ST) is a cross-link (5-methyloxazoline-4-carboxylic acid (Ser-Thr)).

Maturation of thiazole and oxazole containing antibiotics involves the enzymatic condensation of a Cys, Ser or Thr with the alpha-carbonyl of the preceding amino acid to form a thioether or ether bond, then dehydration to form a double bond with the alpha-amino nitrogen. Thiazoline or oxazoline ring are dehydrogenated to form thiazole or oxazole rings. In terms of processing, 2 forms exist: plantazolicin A and plantazolicin B. The structural difference between them is a dimethylation at Arg-28 in plantazolicin A.

It is found in the secreted. Its subcellular location is the cell wall. Its function is as follows. Peptide antibiotic inhibiting growth of Gram-positive bacteria in the dimethylated form plantazolicin A. The desmethyl form plantazolicin B has no antibiotic activity. The mode of action appears to be disruption of cell walls and lysis of cells. Inhibits B.subtilis strain HB0042, B.megaterium strain 7A1 and B.anthracis (MIC=2-4 ug/ml). Weakly inhibits Gram-positive bacteria B.brevis strain ATCC 8246, B.subtilis strain 168, B.cereus strain ATCC 14579 and strain CU1065, B.licheniformis strain ATCC 9789, M.luteus, B.sphaericus, P.granivorans and S.pyogenes (MIC=128 ug/ml). Does not inhibit B.pumilus, P.polymyxa, Arthrobacter sp., S.aureus, vancomycin-resistant E.faecalis, L.monocytogenes, methicillin-resistant S.aureus or Gram-negative bacteria E.coli strain K12, K.terrigena, Pseudomonas sp. and E.carotovora. The chain is Plantazolicin from Bacillus velezensis (strain DSM 23117 / BGSC 10A6 / LMG 26770 / FZB42) (Bacillus amyloliquefaciens subsp. plantarum).